A 367-amino-acid chain; its full sequence is Choline-phosphate cytidylyltransferase A (367 aa).

The residue at position 1 (M1) is an N-acetylmethionine. Residues 1–33 (MDAQCSAKVNARKRRKEAPGPNGATEEDGVPSK) are disordered. Position 8 is an N6-acetyllysine (K8). I84, F85, H92, and K122 together coordinate CTP. 2 residues coordinate phosphocholine: K122 and W151. CTP contacts are provided by H168, D169, Y173, Q195, R196, T197, and I200. Amphipathic regions lie at residues 228–287 (KELN…EFIG) and 298–315 (ALKH…QAIS). S233 is modified (phosphoserine). Residues 272-293 (IDLIQKWEEKSREFIGSFLEMF) form an autoinhibitory (AI) region. Residues 313–367 (AISPKQSPSSSPTRERSPSPSFRWPFSGKTSPPCSPANLSRHKAAAYDISEDEED) are disordered. A phosphoserine mark is found at S315, S319, S321, S322, and S323. Residues 319 to 324 (SPSSSP) form repeat 1. A compositionally biased stretch (low complexity) spans 319–339 (SPSSSPTRERSPSPSFRWPFS). A Phosphothreonine modification is found at T325. 3 positions are modified to phosphoserine: S329, S331, and S333. The stretch at 329–333 (SPSPS) is one 2; approximate repeat. Residue T342 is modified to Phosphothreonine. Phosphoserine occurs at positions 343, 347, 352, and 362. Repeat 3 spans residues 343 to 348 (SPPCSP).

This sequence belongs to the cytidylyltransferase family. As to quaternary structure, homodimer. Post-translationally, the serine residues of the C-terminus are phosphorylated. The inactive soluble form is stabilized by phosphorylation, the active membrane bound form is promoted by anionic lipids or diacylglycerol, and is stabilized by dephosphorylation. Monoubiquitinated by the SCF(FBXL2) complex, leading to proteasomal degradation. Brain, placenta, liver, fetal and adult lung.

Its subcellular location is the cytoplasm. It is found in the cytosol. The protein localises to the membrane. It localises to the endoplasmic reticulum membrane. The protein resides in the nucleus. It catalyses the reaction phosphocholine + CTP + H(+) = CDP-choline + diphosphate. It functions in the pathway phospholipid metabolism; phosphatidylcholine biosynthesis; phosphatidylcholine from phosphocholine: step 1/2. Its activity is regulated as follows. Interconverts between an inactive cytosolic form and an active membrane-bound form. Activation involves disruption of an inhibitory interaction between helices at the base of the active site and the autoinhibitory (AI) region. Activated by anionic lipid vesicles and by oleic acid or diacylglycerol-containing phosphatidylcholine vesicles. Catalyzes the key rate-limiting step in the CDP-choline pathway for phosphatidylcholine biosynthesis. The sequence is that of Choline-phosphate cytidylyltransferase A (PCYT1A) from Homo sapiens (Human).